The following is a 170-amino-acid chain: Cyclic pyranopterin monophosphate synthase (170 aa).

Substrate contacts are provided by residues 89–91 and 125–126; these read LCH and ME. D140 is a catalytic residue.

This sequence belongs to the MoaC family. In terms of assembly, homohexamer; trimer of dimers.

It carries out the reaction (8S)-3',8-cyclo-7,8-dihydroguanosine 5'-triphosphate = cyclic pyranopterin phosphate + diphosphate. It functions in the pathway cofactor biosynthesis; molybdopterin biosynthesis. Catalyzes the conversion of (8S)-3',8-cyclo-7,8-dihydroguanosine 5'-triphosphate to cyclic pyranopterin monophosphate (cPMP). This chain is Cyclic pyranopterin monophosphate synthase, found in Streptomyces avermitilis (strain ATCC 31267 / DSM 46492 / JCM 5070 / NBRC 14893 / NCIMB 12804 / NRRL 8165 / MA-4680).